Reading from the N-terminus, the 546-residue chain is 2-succinyl-5-enolpyruvyl-6-hydroxy-3-cyclohexene-1-carboxylate synthase (546 aa).

Belongs to the TPP enzyme family. MenD subfamily. Homodimer. Mg(2+) serves as cofactor. Mn(2+) is required as a cofactor. It depends on thiamine diphosphate as a cofactor.

The enzyme catalyses isochorismate + 2-oxoglutarate + H(+) = 5-enolpyruvoyl-6-hydroxy-2-succinyl-cyclohex-3-ene-1-carboxylate + CO2. It participates in quinol/quinone metabolism; 1,4-dihydroxy-2-naphthoate biosynthesis; 1,4-dihydroxy-2-naphthoate from chorismate: step 2/7. Its pathway is quinol/quinone metabolism; menaquinone biosynthesis. Catalyzes the thiamine diphosphate-dependent decarboxylation of 2-oxoglutarate and the subsequent addition of the resulting succinic semialdehyde-thiamine pyrophosphate anion to isochorismate to yield 2-succinyl-5-enolpyruvyl-6-hydroxy-3-cyclohexene-1-carboxylate (SEPHCHC). The chain is 2-succinyl-5-enolpyruvyl-6-hydroxy-3-cyclohexene-1-carboxylate synthase from Mycolicibacterium smegmatis (strain ATCC 700084 / mc(2)155) (Mycobacterium smegmatis).